A 1035-amino-acid polypeptide reads, in one-letter code: Beta-galactosidase (1035 aa).

Asn109 and Asp208 together coordinate substrate. Asp208 serves as a coordination point for Na(+). Residues Glu424, His426, and Glu469 each contribute to the Mg(2+) site. Residues Glu469 and 545–548 (EYAH) each bind substrate. Residue Glu469 is the Proton donor of the active site. Glu545 serves as the catalytic Nucleophile. Position 605 (Asn605) interacts with Mg(2+). Phe609 and Asn612 together coordinate Na(+). Substrate-binding residues include Asn612 and Trp1011.

The protein belongs to the glycosyl hydrolase 2 family. As to quaternary structure, homotetramer. Mg(2+) serves as cofactor. It depends on Na(+) as a cofactor.

It carries out the reaction Hydrolysis of terminal non-reducing beta-D-galactose residues in beta-D-galactosides.. The protein is Beta-galactosidase of Klebsiella pneumoniae (strain 342).